The sequence spans 69 residues: Pleurain-A3 (69 aa).

An N-terminal signal peptide occupies residues 1–22 (MFTLKKTLLLLFFLGTISISLC). Residues 23–43 (KQARDADEDDGRKMTEEEVKR) constitute a propeptide that is removed on maturation. An intrachain disulfide couples Cys63 to Cys69.

This sequence belongs to the frog skin active peptide (FSAP) family. Pleurain subfamily. In terms of tissue distribution, expressed by the skin glands.

It localises to the secreted. Its function is as follows. Antimicrobial peptide. Has activity against Gram-positive and -negative bacteria, and fungi. Has little hemolytic activity on red blood cells. The chain is Pleurain-A3 from Nidirana pleuraden (Yunnan pond frog).